A 136-amino-acid chain; its full sequence is Large ribosomal subunit protein uL16c (136 aa).

It belongs to the universal ribosomal protein uL16 family. In terms of assembly, part of the 50S ribosomal subunit.

Its subcellular location is the plastid. It is found in the chloroplast. The protein is Large ribosomal subunit protein uL16c of Oryza sativa (Rice).